The following is a 124-amino-acid chain: Small ribosomal subunit protein uS12 (124 aa).

Asp-90 carries the 3-methylthioaspartic acid modification.

Belongs to the universal ribosomal protein uS12 family. In terms of assembly, part of the 30S ribosomal subunit. Contacts proteins S8 and S17. May interact with IF1 in the 30S initiation complex.

Its function is as follows. With S4 and S5 plays an important role in translational accuracy. In terms of biological role, interacts with and stabilizes bases of the 16S rRNA that are involved in tRNA selection in the A site and with the mRNA backbone. Located at the interface of the 30S and 50S subunits, it traverses the body of the 30S subunit contacting proteins on the other side and probably holding the rRNA structure together. The combined cluster of proteins S8, S12 and S17 appears to hold together the shoulder and platform of the 30S subunit. This is Small ribosomal subunit protein uS12 from Wolbachia sp. subsp. Drosophila simulans (strain wRi).